The following is a 211-amino-acid chain: Chaperone protein TorD (211 aa).

Belongs to the TorD/DmsD family. TorD subfamily.

The protein resides in the cytoplasm. Involved in the biogenesis of TorA. Acts on TorA before the insertion of the molybdenum cofactor and, as a result, probably favors a conformation of the apoenzyme that is competent for acquiring the cofactor. The sequence is that of Chaperone protein TorD from Shewanella loihica (strain ATCC BAA-1088 / PV-4).